Reading from the N-terminus, the 117-residue chain is Immunoglobulin lambda variable 1-51 (117 aa).

The first 19 residues, 1 to 19, serve as a signal peptide directing secretion; the sequence is MTCSPLLLTLLIHCTGSWA. Gln-20 carries the post-translational modification Pyrrolidone carboxylic acid. Residues 20–44 are framework-1; sequence QSVLTQPPSVSAAPGQKVTISCSGS. One can recognise an Ig-like domain in the interval 20–117; sequence QSVLTQPPSV…CGTWDSSLSA (98 aa). A disulfide bond links Cys-41 and Cys-108. The interval 45–52 is complementarity-determining-1; sequence SSNIGNNY. The interval 53–69 is framework-2; that stretch reads VSWYQQLPGTAPKLLIY. The interval 70-72 is complementarity-determining-2; it reads DNN. The segment at 73–108 is framework-3; that stretch reads KRPSGIPDRFSGSKSGTSATLGITGLQTGDEADYYC. The segment at 109–117 is complementarity-determining-3; it reads GTWDSSLSA.

As to quaternary structure, immunoglobulins are composed of two identical heavy chains and two identical light chains; disulfide-linked.

It is found in the secreted. The protein resides in the cell membrane. V region of the variable domain of immunoglobulin light chains that participates in the antigen recognition. Immunoglobulins, also known as antibodies, are membrane-bound or secreted glycoproteins produced by B lymphocytes. In the recognition phase of humoral immunity, the membrane-bound immunoglobulins serve as receptors which, upon binding of a specific antigen, trigger the clonal expansion and differentiation of B lymphocytes into immunoglobulins-secreting plasma cells. Secreted immunoglobulins mediate the effector phase of humoral immunity, which results in the elimination of bound antigens. The antigen binding site is formed by the variable domain of one heavy chain, together with that of its associated light chain. Thus, each immunoglobulin has two antigen binding sites with remarkable affinity for a particular antigen. The variable domains are assembled by a process called V-(D)-J rearrangement and can then be subjected to somatic hypermutations which, after exposure to antigen and selection, allow affinity maturation for a particular antigen. The sequence is that of Immunoglobulin lambda variable 1-51 from Homo sapiens (Human).